Here is a 1415-residue protein sequence, read N- to C-terminus: Bridge-like lipid transfer protein family member 3B (1415 aa).

In terms of domain architecture, Chorein N-terminal spans Gly3–Cys94. Disordered regions lie at residues Ser267–Pro300 and Lys882–Val904. Residues Ala275–Pro300 are compositionally biased toward polar residues. Positions Lys1367 to Leu1404 form a coiled coil.

Its subcellular location is the cytoplasm. The protein localises to the cytosol. The protein resides in the early endosome. In terms of biological role, tube-forming lipid transport protein which mediates the transfer of lipids between membranes at organelle contact sites. Required for retrograde traffic of vesicle clusters in the early endocytic pathway to the Golgi complex. The chain is Bridge-like lipid transfer protein family member 3B (bltp3b) from Xenopus laevis (African clawed frog).